We begin with the raw amino-acid sequence, 360 residues long: E3 ubiquitin-protein ligase RNF146 (360 aa).

An RING-type zinc finger spans residues 37 to 75; the sequence is CAICLQTCVHPVSLPCKHVFCYLCVKGASWLGKRCALCR. Glycyl lysine isopeptide (Lys-Gly) (interchain with G-Cter in ubiquitin) cross-links involve residues lysine 85 and lysine 95. The WWE domain occupies 92–168; it reads EELKAASRGN…EHGRRRKIKR (77 aa). A glycoprotein-binding residues include tyrosine 108, arginine 111, and tryptophan 115. A Glycyl lysine isopeptide (Lys-Gly) (interchain with G-Cter in ubiquitin) cross-link involves residue lysine 131. Positions 145, 154, 164, and 176 each coordinate a glycoprotein. A Glycyl lysine isopeptide (Lys-Gly) (interchain with G-Cter in ubiquitin) cross-link involves residue lysine 176. Residues 259–360 are disordered; that stretch reads ERSHRGEGEE…PDGQCTVTEV (102 aa). Over residues 284 to 294 the composition is skewed to acidic residues; sequence SIEETESDASS. Phosphoserine occurs at positions 290 and 294. Residues 295–305 show a composition bias toward low complexity; that stretch reads DSENVSSAVVA. The segment covering 307 to 333 has biased composition (polar residues); sequence HSLTQQRLLVSNANQTVSDRSDQSGTD.

In terms of assembly, can form homooligomers. Interacts with PARsylated AXIN1, AXIN2, BLZF1, CASC3, H1-2, IPO7, LIG3, NCL, PARP1, XRCC1, XRCC5 and XRCC6. Interacts with DDB1, DHX15, IQGAP1, LRPPRC, PARP2, PRKDC, RUVBL2, TNKS1 and TNKS2. Binding often leads to interactor ubiquitination, in the presence of the appropriate E1 and E2 enzymes, and proteasomal degradation. In terms of processing, ubiquitinated; autoubiquitinated. Autoubiquitination is enhanced upon poly(ADP-ribose)-binding.

The protein resides in the cytoplasm. Its subcellular location is the cytosol. It is found in the nucleus. It carries out the reaction S-ubiquitinyl-[E2 ubiquitin-conjugating enzyme]-L-cysteine + [acceptor protein]-L-lysine = [E2 ubiquitin-conjugating enzyme]-L-cysteine + N(6)-ubiquitinyl-[acceptor protein]-L-lysine.. It participates in protein modification; protein ubiquitination. Functionally, E3 ubiquitin-protein ligase that specifically binds poly-ADP-ribosylated (PARsylated) proteins and mediates their ubiquitination and subsequent degradation. May regulate many important biological processes, such as cell survival and DNA damage response. Acts as an activator of the Wnt signaling pathway by mediating the ubiquitination of PARsylated AXIN1 and AXIN2, 2 key components of the beta-catenin destruction complex. Acts in cooperation with tankyrase proteins (TNKS and TNKS2), which mediate PARsylation of target proteins AXIN1, AXIN2, BLZF1, CASC3, TNKS and TNKS2. Recognizes and binds tankyrase-dependent PARsylated proteins via its WWE domain and mediates their ubiquitination, leading to their degradation. Different ubiquitin linkage types have been observed: TNKS2 undergoes ubiquitination at 'Lys-48' and 'Lys-63', while AXIN1 is only ubiquitinated at 'Lys-48'. May regulate TNKS and TNKS2 subcellular location, preventing aggregation at a centrosomal location. Neuroprotective protein. Protects the brain against N-methyl-D-aspartate (NMDA) receptor-mediated glutamate excitotoxicity and ischemia, by interfering with PAR-induced cell death, called parthanatos. Prevents nuclear translocation of AIFM1 in a PAR-binding dependent manner. Does not affect PARP1 activation. Protects against cell death induced by DNA damaging agents, such as N-methyl-N-nitro-N-nitrosoguanidine (MNNG) and rescues cells from G1 arrest. Promotes cell survival after gamma-irradiation. Facilitates DNA repair. The sequence is that of E3 ubiquitin-protein ligase RNF146 (RNF146) from Macaca fascicularis (Crab-eating macaque).